We begin with the raw amino-acid sequence, 438 residues long: Aspartic proteinase nepenthesin-2 (438 aa).

The N-terminal stretch at 1–24 (MASPLYSVVLGLAIVSAIVAPTSS) is a signal peptide. Residues 25-79 (TSRGTLLHHGQKRPQPGLRVDLEQVDSGKNLTKYELIKRAIKRGERRMRSINAML) constitute a propeptide, activation peptide. N-linked (GlcNAc...) asparagine glycosylation occurs at asparagine 54. In terms of domain architecture, Peptidase A1 spans 96–431 (YLMNVAIGTP…DLQNLAVSFV (336 aa)). Aspartate 114 is an active-site residue. 6 disulfides stabilise this stretch: cysteine 124-cysteine 127, cysteine 130-cysteine 204, cysteine 151-cysteine 169, cysteine 156-cysteine 164, cysteine 241-cysteine 435, and cysteine 354-cysteine 395. Residue aspartate 315 is part of the active site.

This sequence belongs to the peptidase A1 family.

The protein localises to the secreted. It catalyses the reaction Similar to pepsin, but also cleaves on either side of Asp and at Lys-|-Arg.. Its activity is regulated as follows. Inhibited by pepstatin and by diazoacetyl-D,L-norleucine methyl ester (DAN) in the presence of Cu(2+) ions. Extracellular proteinase found in the pitcher fluid of carnivorous plants. Digest prey for nitrogen uptake. The chain is Aspartic proteinase nepenthesin-2 (nep2) from Nepenthes gracilis (Slender pitcher plant).